Consider the following 164-residue polypeptide: Phosphopantetheine adenylyltransferase (164 aa).

Residue Ser9 coordinates substrate. ATP-binding positions include 9–10 (SF) and His17. Substrate is bound by residues Lys41, Val78, and Arg92. ATP-binding positions include 93–95 (GLR), Glu103, and 128–134 (VRTITAT).

It belongs to the bacterial CoaD family. In terms of assembly, homohexamer. Mg(2+) serves as cofactor.

The protein resides in the cytoplasm. It catalyses the reaction (R)-4'-phosphopantetheine + ATP + H(+) = 3'-dephospho-CoA + diphosphate. It participates in cofactor biosynthesis; coenzyme A biosynthesis; CoA from (R)-pantothenate: step 4/5. Its function is as follows. Reversibly transfers an adenylyl group from ATP to 4'-phosphopantetheine, yielding dephospho-CoA (dPCoA) and pyrophosphate. The polypeptide is Phosphopantetheine adenylyltransferase (Brucella anthropi (strain ATCC 49188 / DSM 6882 / CCUG 24695 / JCM 21032 / LMG 3331 / NBRC 15819 / NCTC 12168 / Alc 37) (Ochrobactrum anthropi)).